The following is an 88-amino-acid chain: Small ribosomal subunit protein uS15 (88 aa).

It belongs to the universal ribosomal protein uS15 family. In terms of assembly, part of the 30S ribosomal subunit. Forms a bridge to the 50S subunit in the 70S ribosome, contacting the 23S rRNA.

In terms of biological role, one of the primary rRNA binding proteins, it binds directly to 16S rRNA where it helps nucleate assembly of the platform of the 30S subunit by binding and bridging several RNA helices of the 16S rRNA. Its function is as follows. Forms an intersubunit bridge (bridge B4) with the 23S rRNA of the 50S subunit in the ribosome. This chain is Small ribosomal subunit protein uS15, found in Borrelia turicatae (strain 91E135).